Here is an 872-residue protein sequence, read N- to C-terminus: Bifunctional heparan sulfate N-deacetylase/N-sulfotransferase 4 (872 aa).

The Cytoplasmic portion of the chain corresponds to 1-13 (MNLILKFRRSFRT). A helical; Signal-anchor for type II membrane protein membrane pass occupies residues 14–34 (LIVLLATFCLVSILISAYFLY). The Lumenal portion of the chain corresponds to 35 to 872 (SGYKQEMTLI…WLRQELQKVR (838 aa)). The tract at residues 36-588 (GYKQEMTLIE…KRHKDIWSRE (553 aa)) is heparan sulfate N-deacetylase 4. Residues asparagine 226, asparagine 341, and asparagine 391 are each glycosylated (N-linked (GlcNAc...) asparagine). The heparan sulfate N-sulfotransferase 4 stretch occupies residues 589 to 872 (KTCDHLPKFL…WLRQELQKVR (284 aa)). Lysine 604 functions as the For sulfotransferase activity in the catalytic mechanism. 604 to 608 (KTGTT) is a binding site for 3'-phosphoadenylyl sulfate. Asparagine 657 carries N-linked (GlcNAc...) asparagine glycosylation. 3'-phosphoadenylyl sulfate is bound at residue serine 702. Asparagine 793 carries an N-linked (GlcNAc...) asparagine glycan. The cysteines at positions 808 and 818 are disulfide-linked. A 3'-phosphoadenylyl sulfate-binding site is contributed by 823-827 (KGRKY).

It belongs to the sulfotransferase 1 family. NDST subfamily. Monomer. In terms of tissue distribution, expressed at low level in brain and throughout embryogenesis. Not expressed in other tissues.

The protein localises to the golgi apparatus membrane. The catalysed reaction is alpha-D-glucosaminyl-[heparan sulfate](n) + 3'-phosphoadenylyl sulfate = N-sulfo-alpha-D-glucosaminyl-[heparan sulfate](n) + adenosine 3',5'-bisphosphate + 2 H(+). It participates in glycan metabolism; heparan sulfate biosynthesis. Its pathway is glycan metabolism; heparin biosynthesis. Its function is as follows. Essential bifunctional enzyme that catalyzes both the N-deacetylation and the N-sulfation of glucosamine (GlcNAc) of the glycosaminoglycan in heparan sulfate. Modifies the GlcNAc-GlcA disaccharide repeating sugar backbone to make N-sulfated heparosan, a prerequisite substrate for later modifications in heparin biosynthesis. Has low deacetylase activity but high sulfotransferase activity. In Mus musculus (Mouse), this protein is Bifunctional heparan sulfate N-deacetylase/N-sulfotransferase 4 (Ndst4).